A 161-amino-acid polypeptide reads, in one-letter code: ATP synthase subunit b 1 (161 aa).

Residues 6–26 (EFYVALGFVIFVAILLYYGVH) traverse the membrane as a helical segment.

Belongs to the ATPase B chain family. As to quaternary structure, F-type ATPases have 2 components, F(1) - the catalytic core - and F(0) - the membrane proton channel. F(1) has five subunits: alpha(3), beta(3), gamma(1), delta(1), epsilon(1). F(0) has three main subunits: a(1), b(2) and c(10-14). The alpha and beta chains form an alternating ring which encloses part of the gamma chain. F(1) is attached to F(0) by a central stalk formed by the gamma and epsilon chains, while a peripheral stalk is formed by the delta and b chains.

It localises to the cell inner membrane. F(1)F(0) ATP synthase produces ATP from ADP in the presence of a proton or sodium gradient. F-type ATPases consist of two structural domains, F(1) containing the extramembraneous catalytic core and F(0) containing the membrane proton channel, linked together by a central stalk and a peripheral stalk. During catalysis, ATP synthesis in the catalytic domain of F(1) is coupled via a rotary mechanism of the central stalk subunits to proton translocation. In terms of biological role, component of the F(0) channel, it forms part of the peripheral stalk, linking F(1) to F(0). This Beijerinckia indica subsp. indica (strain ATCC 9039 / DSM 1715 / NCIMB 8712) protein is ATP synthase subunit b 1.